A 508-amino-acid polypeptide reads, in one-letter code: Pancreatic alpha-amylase (508 aa).

A signal peptide spans 1–15; sequence MKFVLLLSLIGFCWA. Position 16 is a pyrrolidone carboxylic acid (Gln16). Cystine bridges form between Cys43–Cys101, Cys85–Cys130, and Cys156–Cys172. Residues Asn115, Arg170, and Asp179 each contribute to the Ca(2+) site. A chloride-binding site is contributed by Arg207. The Nucleophile role is filled by Asp209. His213 lines the Ca(2+) pocket. Glu245 serves as the catalytic Proton donor. 2 residues coordinate chloride: Asn310 and Arg349. 2 disulfides stabilise this stretch: Cys390-Cys396 and Cys462-Cys474.

The protein belongs to the glycosyl hydrolase 13 family. As to quaternary structure, monomer. Ca(2+) serves as cofactor. Requires chloride as cofactor.

The protein resides in the secreted. It is found in the extracellular space. It carries out the reaction Endohydrolysis of (1-&gt;4)-alpha-D-glucosidic linkages in polysaccharides containing three or more (1-&gt;4)-alpha-linked D-glucose units.. The protein is Pancreatic alpha-amylase (Amy2) of Rattus norvegicus (Rat).